Reading from the N-terminus, the 180-residue chain is Large ribosomal subunit protein uL5c (180 aa).

This sequence belongs to the universal ribosomal protein uL5 family. Part of the 50S ribosomal subunit; contacts the 5S rRNA.

Its subcellular location is the plastid. It is found in the chloroplast. In terms of biological role, binds 5S rRNA, forms part of the central protuberance of the 50S subunit. This is Large ribosomal subunit protein uL5c (rpl5) from Tupiella akineta (Green alga).